The following is a 287-amino-acid chain: ATP phosphoribosyltransferase (287 aa).

The protein belongs to the ATP phosphoribosyltransferase family. Long subfamily. Equilibrium between an active dimeric form, an inactive hexameric form and higher aggregates. Interconversion between the various forms is largely reversible and is influenced by the natural substrates and inhibitors of the enzyme. It depends on Mg(2+) as a cofactor.

The protein resides in the cytoplasm. The enzyme catalyses 1-(5-phospho-beta-D-ribosyl)-ATP + diphosphate = 5-phospho-alpha-D-ribose 1-diphosphate + ATP. Its pathway is amino-acid biosynthesis; L-histidine biosynthesis; L-histidine from 5-phospho-alpha-D-ribose 1-diphosphate: step 1/9. With respect to regulation, feedback inhibited by histidine. Catalyzes the condensation of ATP and 5-phosphoribose 1-diphosphate to form N'-(5'-phosphoribosyl)-ATP (PR-ATP). Has a crucial role in the pathway because the rate of histidine biosynthesis seems to be controlled primarily by regulation of HisG enzymatic activity. This chain is ATP phosphoribosyltransferase (hisG), found in Mycobacterium leprae (strain TN).